Consider the following 285-residue polypeptide: Glutamate racemase (285 aa).

Substrate is bound by residues 28 to 29 (DS) and 60 to 61 (YG). Residue C92 is the Proton donor/acceptor of the active site. 93–94 (NT) is a binding site for substrate. C204 (proton donor/acceptor) is an active-site residue. A substrate-binding site is contributed by 205-206 (TH).

It belongs to the aspartate/glutamate racemases family.

It carries out the reaction L-glutamate = D-glutamate. Its pathway is cell wall biogenesis; peptidoglycan biosynthesis. Functionally, provides the (R)-glutamate required for cell wall biosynthesis. This chain is Glutamate racemase, found in Escherichia fergusonii (strain ATCC 35469 / DSM 13698 / CCUG 18766 / IAM 14443 / JCM 21226 / LMG 7866 / NBRC 102419 / NCTC 12128 / CDC 0568-73).